The primary structure comprises 435 residues: Chaperone SurA (435 aa).

A signal peptide spans 1–24 (MRLRSFAFLGFMLLVAMAPSMASA). PpiC domains lie at 173–274 (DTAY…KLID) and 286–385 (VTEN…ELED).

The protein resides in the periplasm. The catalysed reaction is [protein]-peptidylproline (omega=180) = [protein]-peptidylproline (omega=0). Its function is as follows. Chaperone involved in the correct folding and assembly of outer membrane proteins. Recognizes specific patterns of aromatic residues and the orientation of their side chains, which are found more frequently in integral outer membrane proteins. May act in both early periplasmic and late outer membrane-associated steps of protein maturation. The polypeptide is Chaperone SurA (Chromohalobacter salexigens (strain ATCC BAA-138 / DSM 3043 / CIP 106854 / NCIMB 13768 / 1H11)).